The chain runs to 323 residues: 4-hydroxythreonine-4-phosphate dehydrogenase (323 aa).

Threonine 133 serves as a coordination point for substrate. Residues histidine 161, histidine 206, and histidine 261 each contribute to the a divalent metal cation site. Residues lysine 269, asparagine 278, and arginine 287 each contribute to the substrate site.

This sequence belongs to the PdxA family. Homodimer. Zn(2+) serves as cofactor. Mg(2+) is required as a cofactor. Requires Co(2+) as cofactor.

It localises to the cytoplasm. The enzyme catalyses 4-(phosphooxy)-L-threonine + NAD(+) = 3-amino-2-oxopropyl phosphate + CO2 + NADH. The protein operates within cofactor biosynthesis; pyridoxine 5'-phosphate biosynthesis; pyridoxine 5'-phosphate from D-erythrose 4-phosphate: step 4/5. Functionally, catalyzes the NAD(P)-dependent oxidation of 4-(phosphooxy)-L-threonine (HTP) into 2-amino-3-oxo-4-(phosphooxy)butyric acid which spontaneously decarboxylates to form 3-amino-2-oxopropyl phosphate (AHAP). This is 4-hydroxythreonine-4-phosphate dehydrogenase from Xanthomonas axonopodis pv. citri (strain 306).